Reading from the N-terminus, the 247-residue chain is UPF0280 protein MmarC6_1437 (247 aa).

Belongs to the UPF0280 family.

This Methanococcus maripaludis (strain C6 / ATCC BAA-1332) protein is UPF0280 protein MmarC6_1437.